Reading from the N-terminus, the 636-residue chain is uncharacterized protein (636 aa).

The zn(2)-C6 fungal-type DNA-binding region spans cysteine 10–cysteine 36. A compositionally biased stretch (polar residues) spans asparagine 556–serine 580. The interval asparagine 556 to glutamate 581 is disordered.

Its subcellular location is the cytoplasm. It localises to the nucleus. This is an uncharacterized protein from Schizosaccharomyces pombe (strain 972 / ATCC 24843) (Fission yeast).